The following is a 273-amino-acid chain: Bis(5'-nucleosyl)-tetraphosphatase, symmetrical (273 aa).

This sequence belongs to the Ap4A hydrolase family.

The enzyme catalyses P(1),P(4)-bis(5'-adenosyl) tetraphosphate + H2O = 2 ADP + 2 H(+). Functionally, hydrolyzes diadenosine 5',5'''-P1,P4-tetraphosphate to yield ADP. This Aeromonas salmonicida (strain A449) protein is Bis(5'-nucleosyl)-tetraphosphatase, symmetrical.